Consider the following 242-residue polypeptide: MSQPIYKRILLKLSGEALQGDEGFGIDPSILDRMALEIKELVAMGVEVGVVLGGGNLFRGAKLAKAGMNRVVGDHMGMLATVMNGLAMRDALHRADVNAKLMSAFQLNGICDTYNWSEAIKMLREKRVVIFSAGTGSPFFTTDSAACLRGIEIEADVVLKATKVDGVYNCDPAKNADAVLYHQLNYADVIEHELQVMDLAAFTLARDHHMPIRVFNMGKPGALRRVILGEVEGTLICDQKLS.

12 to 15 (KLSG) is an ATP binding site. The segment at 20–25 (GDEGFG) is involved in allosteric activation by GTP. Gly54 serves as a coordination point for UMP. Residues Gly55 and Arg59 each coordinate ATP. Residues Asp74 and 135–142 (TGSPFFTT) contribute to the UMP site. Residues Thr162, Tyr168, and Asp171 each coordinate ATP.

Belongs to the UMP kinase family. In terms of assembly, homohexamer.

Its subcellular location is the cytoplasm. It carries out the reaction UMP + ATP = UDP + ADP. It participates in pyrimidine metabolism; CTP biosynthesis via de novo pathway; UDP from UMP (UMPK route): step 1/1. Its activity is regulated as follows. Allosterically activated by GTP. Inhibited by UTP. Its function is as follows. Catalyzes the reversible phosphorylation of UMP to UDP. This chain is Uridylate kinase, found in Pasteurella multocida (strain Pm70).